A 543-amino-acid chain; its full sequence is Excitatory amino acid transporter 1 (543 aa).

At 1-47 (MTKSNGEEPRMGGRMERLQQGVRKRTLLAKKKVQSLTKEDVKSYLFR) the chain is on the cytoplasmic side. A helical membrane pass occupies residues 48–68 (NAFVLLTVTAVIVGTILGFAL). Residues 69 to 86 (RPYKMSYREVKYFSFPGE) are Extracellular-facing. Residues 87–108 (LLMRMLQMLVLPLIISSLVTGM) traverse the membrane as a helical segment. Residues 109–122 (AALDSKASGKMGMR) are Cytoplasmic-facing. Residues 123 to 145 (AVVYYMTTTIIAVVIGIIIVIII) traverse the membrane as a helical segment. The Extracellular segment spans residues 146–236 (HPGKGTKENM…IREEMVPVPG (91 aa)). N-linked (GlcNAc...) asparagine glycans are attached at residues N206 and N216. A helical transmembrane segment spans residues 237 to 260 (SVNGVNALGLVVFSMCFGFVIGNM). At 261-269 (KEQGQALRE) the chain is on the cytoplasmic side. Residues 270 to 297 (FFDSLNEAIMRLVAVIMWYAPLGILFLI) form a helical membrane-spanning segment. The Extracellular portion of the chain corresponds to 298-318 (AGKIVEMEDMGVIGGQLAMYT). Residues 319 to 340 (VTVIVGLLIHAVIVLPLLYFLV) form a helical membrane-spanning segment. The Cytoplasmic portion of the chain corresponds to 341–345 (TRKNP). Positions 346 to 376 (WVFIGGLLQALITALGTSSSSATLPITFKCL) form an intramembrane region, discontinuously helical. Residue 363–365 (SSS) coordinates L-aspartate. Residues 377 to 385 (EENNGVDKR) lie on the Cytoplasmic side of the membrane. A helical transmembrane segment spans residues 386 to 412 (ITRFVLPVGATINMDGTALYEALAAIF). Na(+) contacts are provided by G394, T396, and N398. Residue T402 participates in L-aspartate binding. The Extracellular portion of the chain corresponds to 413-425 (IAQVNNFDLNFGQ). Positions 426–459 (IITISITATAASIGAAGIPQAGLVTMVIVLTSVG) form an intramembrane region, discontinuously helical. 443-447 (IPQAG) provides a ligand contact to L-aspartate. Residues 460 to 472 (LPTDDITLIIAVD) are Extracellular-facing. The helical transmembrane segment at 473-494 (WFLDRLRTTTNVLGDSLGAGIV) threads the bilayer. L-aspartate contacts are provided by D476 and N483. Residues N483 and D487 each coordinate Na(+). The Cytoplasmic portion of the chain corresponds to 495-543 (EHLSRHELKNRDVEMGNSVIEENEMKKPYQLIAQDNEPEKPVADSETKM). S512 is subject to Phosphoserine. A disordered region spans residues 522–543 (PYQLIAQDNEPEKPVADSETKM). The segment covering 531 to 543 (EPEKPVADSETKM) has biased composition (basic and acidic residues).

The protein belongs to the dicarboxylate/amino acid:cation symporter (DAACS) (TC 2.A.23) family. SLC1A3 subfamily. As to quaternary structure, homotrimer. In terms of processing, glycosylated. In terms of tissue distribution, detected in brain, in Bergmann glia arborising into the molecular layer of the cerebellum (at protein level). Localized in brain and is highly enriched in the Purkinje cell layer in cerebellum. Intermediate level in lung, low level in spleen, skeletal muscle and testis.

It localises to the cell membrane. It carries out the reaction K(+)(in) + L-glutamate(out) + 3 Na(+)(out) + H(+)(out) = K(+)(out) + L-glutamate(in) + 3 Na(+)(in) + H(+)(in). The enzyme catalyses K(+)(in) + L-aspartate(out) + 3 Na(+)(out) + H(+)(out) = K(+)(out) + L-aspartate(in) + 3 Na(+)(in) + H(+)(in). The catalysed reaction is D-aspartate(out) + K(+)(in) + 3 Na(+)(out) + H(+)(out) = D-aspartate(in) + K(+)(out) + 3 Na(+)(in) + H(+)(in). Its function is as follows. Sodium-dependent, high-affinity amino acid transporter that mediates the uptake of L-glutamate and also L-aspartate and D-aspartate. Functions as a symporter that transports one amino acid molecule together with two or three Na(+) ions and one proton, in parallel with the counter-transport of one K(+) ion. Plays a redundant role in the rapid removal of released glutamate from the synaptic cleft, which is essential for terminating the postsynaptic action of glutamate. The polypeptide is Excitatory amino acid transporter 1 (Slc1a3) (Mus musculus (Mouse)).